Consider the following 323-residue polypeptide: MKQYLDLVQSILDQGAWQENRTGVRTLSLPGAALRFDLQQGFPAVTTKKLAFKSAIGEMVGFLRATRSAAQFRALGCKVWDQNANENEQWLANPYREGPDDLGPVYGVQWRHWPAYKLLPRSAGGQVADALARGYRQVAEVAENGAPHVLLYKAVDQLRQCLDTIHQSPGDRRILFHGWNWAQIEEMALPPCHLLYQFLPNAGTREISLCLYIRSNDVGLGTPFNLTEGAALLHLVGRLTGYKPRWFSYFIGDAHVYENHLPMLREQLTREPYPAPQLVLSDRIPDFAVTGKYEPQWLEQVEPGDFTLSGYQHHAPLTAPMAV.

Residues Arg21 and Arg172–Arg173 each bind dUMP. The Nucleophile role is filled by Cys192. Residues Arg214–Asp217, Asn225, and His255–Tyr257 each bind dUMP. Asp217 is a (6R)-5,10-methylene-5,6,7,8-tetrahydrofolate binding site. Ala322 contacts (6R)-5,10-methylene-5,6,7,8-tetrahydrofolate.

This sequence belongs to the thymidylate synthase family. Bacterial-type ThyA subfamily. As to quaternary structure, homodimer.

It is found in the cytoplasm. It catalyses the reaction dUMP + (6R)-5,10-methylene-5,6,7,8-tetrahydrofolate = 7,8-dihydrofolate + dTMP. It functions in the pathway pyrimidine metabolism; dTTP biosynthesis. Its function is as follows. Catalyzes the reductive methylation of 2'-deoxyuridine-5'-monophosphate (dUMP) to 2'-deoxythymidine-5'-monophosphate (dTMP) while utilizing 5,10-methylenetetrahydrofolate (mTHF) as the methyl donor and reductant in the reaction, yielding dihydrofolate (DHF) as a by-product. This enzymatic reaction provides an intracellular de novo source of dTMP, an essential precursor for DNA biosynthesis. This chain is Thymidylate synthase, found in Bordetella parapertussis (strain 12822 / ATCC BAA-587 / NCTC 13253).